A 272-amino-acid polypeptide reads, in one-letter code: ATP phosphoribosyltransferase regulatory subunit (272 aa).

This sequence belongs to the class-II aminoacyl-tRNA synthetase family. HisZ subfamily. Heteromultimer composed of HisG and HisZ subunits.

It is found in the cytoplasm. The protein operates within amino-acid biosynthesis; L-histidine biosynthesis; L-histidine from 5-phospho-alpha-D-ribose 1-diphosphate: step 1/9. In terms of biological role, required for the first step of histidine biosynthesis. May allow the feedback regulation of ATP phosphoribosyltransferase activity by histidine. This Staphylococcus aureus (strain Mu3 / ATCC 700698) protein is ATP phosphoribosyltransferase regulatory subunit.